The following is a 108-amino-acid chain: U3-lycotoxin-Ls1w (108 aa).

The signal sequence occupies residues 1-20; it reads MKFVLLFGVLLVTLFSYSSA. Positions 21–44 are excised as a propeptide; it reads EMLDDFDQADEDELLSLIEKEEAR. 4 disulfide bridges follow: Cys48/Cys63, Cys55/Cys72, Cys62/Cys87, and Cys74/Cys85.

It belongs to the neurotoxin 19 (CSTX) family. 01 subfamily. Expressed by the venom gland.

The protein resides in the secreted. The polypeptide is U3-lycotoxin-Ls1w (Lycosa singoriensis (Wolf spider)).